Reading from the N-terminus, the 449-residue chain is UDP-N-acetylmuramoylalanine--D-glutamate ligase (449 aa).

ATP is bound at residue 119–125; it reads GSNGKTT.

This sequence belongs to the MurCDEF family.

It localises to the cytoplasm. It catalyses the reaction UDP-N-acetyl-alpha-D-muramoyl-L-alanine + D-glutamate + ATP = UDP-N-acetyl-alpha-D-muramoyl-L-alanyl-D-glutamate + ADP + phosphate + H(+). The protein operates within cell wall biogenesis; peptidoglycan biosynthesis. Cell wall formation. Catalyzes the addition of glutamate to the nucleotide precursor UDP-N-acetylmuramoyl-L-alanine (UMA). This chain is UDP-N-acetylmuramoylalanine--D-glutamate ligase, found in Streptococcus suis (strain 98HAH33).